Consider the following 899-residue polypeptide: Core protein VP3 (899 aa).

Residues 1 to 21 (MADPPDANVPKTSPYLKGDEL) form a disordered region.

The protein belongs to the orbivirus VP3 family.

Its subcellular location is the virion. In terms of biological role, the VP3 protein is one of the five proteins (with VP1, VP4, VP6 and VP7) which form the inner capsid of the virus. This Epizootic hemorrhagic disease virus 1 (EHDV-1) protein is Core protein VP3 (Segment-3).